Consider the following 132-residue polypeptide: NADH-quinone oxidoreductase subunit A (132 aa).

Helical transmembrane passes span 7 to 27, 62 to 82, and 91 to 111; these read YWVL…MIGV, FYLI…LYAW, and WTGY…LAYL.

It belongs to the complex I subunit 3 family. In terms of assembly, NDH-1 is composed of 14 different subunits. Subunits NuoA, H, J, K, L, M, N constitute the membrane sector of the complex.

It localises to the cell inner membrane. The catalysed reaction is a quinone + NADH + 5 H(+)(in) = a quinol + NAD(+) + 4 H(+)(out). NDH-1 shuttles electrons from NADH, via FMN and iron-sulfur (Fe-S) centers, to quinones in the respiratory chain. The immediate electron acceptor for the enzyme in this species is believed to be ubiquinone. Couples the redox reaction to proton translocation (for every two electrons transferred, four hydrogen ions are translocated across the cytoplasmic membrane), and thus conserves the redox energy in a proton gradient. The chain is NADH-quinone oxidoreductase subunit A from Acidiphilium cryptum (strain JF-5).